A 274-amino-acid chain; its full sequence is Phosphatidylglycerol--prolipoprotein diacylglyceryl transferase (274 aa).

4 consecutive transmembrane segments (helical) span residues 24–44, 60–80, 96–116, and 122–142; these read WYALAYIVGLLGGWWYTRFLS, LLVWATLGTILGGRLGYVVFY, WHGGMSFHGGLVGVITATVLF, and LSVARVGDLVALVAPLGLFFG. Residue R143 coordinates a 1,2-diacyl-sn-glycero-3-phospho-(1'-sn-glycerol). 3 helical membrane passes run 182–202, 207–227, and 241–261; these read ATLEGLVLFCLLGLLWRFTAL, GQIIGLFLIGYGLSRITAEFF, and VTMGQILSLPMILAGIVVFVV.

The protein belongs to the Lgt family.

The protein localises to the cell inner membrane. It catalyses the reaction L-cysteinyl-[prolipoprotein] + a 1,2-diacyl-sn-glycero-3-phospho-(1'-sn-glycerol) = an S-1,2-diacyl-sn-glyceryl-L-cysteinyl-[prolipoprotein] + sn-glycerol 1-phosphate + H(+). It functions in the pathway protein modification; lipoprotein biosynthesis (diacylglyceryl transfer). Catalyzes the transfer of the diacylglyceryl group from phosphatidylglycerol to the sulfhydryl group of the N-terminal cysteine of a prolipoprotein, the first step in the formation of mature lipoproteins. The sequence is that of Phosphatidylglycerol--prolipoprotein diacylglyceryl transferase from Rhodospirillum rubrum (strain ATCC 11170 / ATH 1.1.1 / DSM 467 / LMG 4362 / NCIMB 8255 / S1).